The sequence spans 528 residues: 2-isopropylmalate synthase (528 aa).

The 268-residue stretch at 12–279 (IRIFDTTLRD…DSSINTPRIV (268 aa)) folds into the Pyruvate carboxyltransferase domain. Residues aspartate 21, histidine 214, histidine 216, and asparagine 250 each contribute to the Mn(2+) site. Residues 401 to 528 (RLASMTISDV…TTEAPAPATA (128 aa)) are regulatory domain.

The protein belongs to the alpha-IPM synthase/homocitrate synthase family. LeuA type 1 subfamily. In terms of assembly, homodimer. Mn(2+) is required as a cofactor.

The protein localises to the cytoplasm. It catalyses the reaction 3-methyl-2-oxobutanoate + acetyl-CoA + H2O = (2S)-2-isopropylmalate + CoA + H(+). Its pathway is amino-acid biosynthesis; L-leucine biosynthesis; L-leucine from 3-methyl-2-oxobutanoate: step 1/4. Its function is as follows. Catalyzes the condensation of the acetyl group of acetyl-CoA with 3-methyl-2-oxobutanoate (2-ketoisovalerate) to form 3-carboxy-3-hydroxy-4-methylpentanoate (2-isopropylmalate). In Stenotrophomonas maltophilia (strain R551-3), this protein is 2-isopropylmalate synthase.